Reading from the N-terminus, the 155-residue chain is 6,7-dimethyl-8-ribityllumazine synthase (155 aa).

Residues Phe-23, 57–59, and 83–85 contribute to the 5-amino-6-(D-ribitylamino)uracil site; these read AFE and AVI. 88–89 serves as a coordination point for (2S)-2-hydroxy-3-oxobutyl phosphate; sequence AT. The Proton donor role is filled by His-91. 5-amino-6-(D-ribitylamino)uracil is bound at residue Phe-114. Position 128 (Arg-128) interacts with (2S)-2-hydroxy-3-oxobutyl phosphate.

Belongs to the DMRL synthase family.

It carries out the reaction (2S)-2-hydroxy-3-oxobutyl phosphate + 5-amino-6-(D-ribitylamino)uracil = 6,7-dimethyl-8-(1-D-ribityl)lumazine + phosphate + 2 H2O + H(+). It participates in cofactor biosynthesis; riboflavin biosynthesis; riboflavin from 2-hydroxy-3-oxobutyl phosphate and 5-amino-6-(D-ribitylamino)uracil: step 1/2. In terms of biological role, catalyzes the formation of 6,7-dimethyl-8-ribityllumazine by condensation of 5-amino-6-(D-ribitylamino)uracil with 3,4-dihydroxy-2-butanone 4-phosphate. This is the penultimate step in the biosynthesis of riboflavin. The chain is 6,7-dimethyl-8-ribityllumazine synthase from Leptospira biflexa serovar Patoc (strain Patoc 1 / Ames).